Consider the following 501-residue polypeptide: Glycerol kinase (501 aa).

T16 is a binding site for ADP. 3 residues coordinate ATP: T16, T17, and S18. A sn-glycerol 3-phosphate-binding site is contributed by T16. R20 provides a ligand contact to ADP. R84, E85, Y135, and D242 together coordinate sn-glycerol 3-phosphate. Residues R84, E85, Y135, D242, and Q243 each contribute to the glycerol site. Positions 264 and 307 each coordinate ADP. Positions 264, 307, 311, and 408 each coordinate ATP. G408 serves as a coordination point for ADP.

Belongs to the FGGY kinase family.

The catalysed reaction is glycerol + ATP = sn-glycerol 3-phosphate + ADP + H(+). It participates in polyol metabolism; glycerol degradation via glycerol kinase pathway; sn-glycerol 3-phosphate from glycerol: step 1/1. In terms of biological role, key enzyme in the regulation of glycerol uptake and metabolism. Catalyzes the phosphorylation of glycerol to yield sn-glycerol 3-phosphate. The sequence is that of Glycerol kinase from Saccharolobus islandicus (strain M.14.25 / Kamchatka #1) (Sulfolobus islandicus).